A 300-amino-acid chain; its full sequence is GTP cyclohydrolase FolE2 (300 aa).

The protein belongs to the GTP cyclohydrolase IV family.

It carries out the reaction GTP + H2O = 7,8-dihydroneopterin 3'-triphosphate + formate + H(+). It functions in the pathway cofactor biosynthesis; 7,8-dihydroneopterin triphosphate biosynthesis; 7,8-dihydroneopterin triphosphate from GTP: step 1/1. Functionally, converts GTP to 7,8-dihydroneopterin triphosphate. The sequence is that of GTP cyclohydrolase FolE2 from Bacillus licheniformis (strain ATCC 14580 / DSM 13 / JCM 2505 / CCUG 7422 / NBRC 12200 / NCIMB 9375 / NCTC 10341 / NRRL NRS-1264 / Gibson 46).